The primary structure comprises 146 residues: Late protein OPG112 (146 aa).

A helical membrane pass occupies residues 10 to 32 (LAMTAFFGELNTLDIMALIMSIF).

It belongs to the orthopoxvirus OPG112 family.

The protein resides in the host membrane. Its subcellular location is the host cytoplasm. Contributes to the formation of crescents and immature virions (IV). Interacts with phosphatidylinositol-3-phosphate (PI3P) and phosphatidylinositol-4-phosphate (PI4P) lipids in order to form virion membranes. Mechanistically, mediates proper formation of OPG125-hexamers, and hence the honey comb lattice and spherical immature virus. This is Late protein OPG112 (OPG112) from Homo sapiens (Human).